A 537-amino-acid polypeptide reads, in one-letter code: Chaperonin GroEL (537 aa).

ATP is bound by residues 29 to 32, 86 to 90, G413, 477 to 479, and D493; these read TLGP, DGTTT, and NAA.

It belongs to the chaperonin (HSP60) family. As to quaternary structure, forms a cylinder of 14 subunits composed of two heptameric rings stacked back-to-back. Interacts with the co-chaperonin GroES.

Its subcellular location is the cytoplasm. It carries out the reaction ATP + H2O + a folded polypeptide = ADP + phosphate + an unfolded polypeptide.. Functionally, together with its co-chaperonin GroES, plays an essential role in assisting protein folding. The GroEL-GroES system forms a nano-cage that allows encapsulation of the non-native substrate proteins and provides a physical environment optimized to promote and accelerate protein folding. In Parascardovia denticolens (Bifidobacterium denticolens), this protein is Chaperonin GroEL.